Consider the following 124-residue polypeptide: Mitochondrial import inner membrane translocase subunit TIM16 (124 aa).

The tract at residues 58 to 109 (EAQQILNISKLSPEEVQNYEHLFKVNDKSVGDSFYLQSKVVRAKERLDEELQ) is J-like. A Phosphoserine modification is found at Ser69.

Belongs to the TIM16/PAM16 family. Probable component of the PAM complex at least composed of a mitochondrial HSP70 protein, GRPEL1 or GRPEL2, TIMM44, TIMM16/PAM16 and TIMM14/DNAJC19. Interacts with DNAJC19. Directly interacts with DNAJC15; this interaction counteracts DNAJC15-dependent stimulation of HSPA9 ATPase activity. Associates with the TIM23 complex.

The protein localises to the mitochondrion inner membrane. In terms of biological role, regulates ATP-dependent protein translocation into the mitochondrial matrix. Inhibits DNAJC19 stimulation of HSPA9/Mortalin ATPase activity. This is Mitochondrial import inner membrane translocase subunit TIM16 (Magmas-ps1) from Rattus norvegicus (Rat).